The chain runs to 406 residues: RILP-like protein 1 (406 aa).

Position 7 is a phosphoserine (Ser-7). One can recognise an RH1 domain in the interval 10–97 (AALSALEKNV…RVERMDRIEK (88 aa)). Position 47 is an S-nitrosocysteine (Cys-47). Positions 76 to 258 (ELDELRLELD…KLRERLQGEH (183 aa)) form a coiled coil. Disordered regions lie at residues 255–280 (QGEHSQNGEEEEAEIPPQPDGEESIS) and 330–354 (EIEEENRIPQPPPITHPRTSPQPES). Ser-259 bears the Phosphoserine mark. Positions 262–280 (GEEEEAEIPPQPDGEESIS) are enriched in acidic residues. Residues 294–359 (RPRFTLQELR…PQPESGIKRL (66 aa)) enclose the RH2 domain.

This sequence belongs to the RILPL family. Interacts (when S-nitrosylated) with GAPDH. Interacts with RAB8A; interaction is dependent on the phosphorylation of 'Thr-72' of RAB8A. Interacts with RAB10 and RAB12; the interaction is dependent on the phosphorylation of 'Thr-73' of RAB10, and 'Ser-105' of RAB12. S-nitrosylation is required for the interaction with GAPDH. Highly expressed in heart, skeletal muscle, brain and lung (at protein level).

The protein localises to the cytoplasm. Its subcellular location is the cytosol. It is found in the cytoskeleton. It localises to the microtubule organizing center. The protein resides in the centrosome. The protein localises to the centriole. Its subcellular location is the cilium basal body. Plays a role in the regulation of cell shape and polarity. Plays a role in cellular protein transport, including protein transport away from primary cilia. Neuroprotective protein, which acts by sequestring GAPDH in the cytosol and prevent the apoptotic function of GAPDH in the nucleus. Competes with SIAH1 for binding GAPDH. Does not regulate lysosomal morphology and distribution. Binds to RAB10 following LRRK2-mediated RAB10 phosphorylation which leads to inhibition of ciliogenesis. This Rattus norvegicus (Rat) protein is RILP-like protein 1 (Rilpl1).